Reading from the N-terminus, the 116-residue chain is Regulator of ribonuclease activity B (116 aa).

It belongs to the RraB family. In terms of assembly, interacts with the C-terminal region of Rne.

Its subcellular location is the cytoplasm. Its function is as follows. Globally modulates RNA abundance by binding to RNase E (Rne) and regulating its endonucleolytic activity. Can modulate Rne action in a substrate-dependent manner by altering the composition of the degradosome. The protein is Regulator of ribonuclease activity B of Colwellia psychrerythraea (strain 34H / ATCC BAA-681) (Vibrio psychroerythus).